Consider the following 122-residue polypeptide: Basic phospholipase A2 Cdr-13 (122 aa).

7 disulfides stabilise this stretch: Cys26/Cys115, Cys28/Cys44, Cys43/Cys95, Cys49/Cys122, Cys50/Cys88, Cys57/Cys81, and Cys75/Cys86. Ca(2+)-binding residues include Tyr27, Gly29, and Gly31. The active site involves His47. A Ca(2+)-binding site is contributed by Asp48. The active site involves Asp89.

The cofactor is Ca(2+). In terms of tissue distribution, expressed by the venom gland.

The protein resides in the secreted. The catalysed reaction is a 1,2-diacyl-sn-glycero-3-phosphocholine + H2O = a 1-acyl-sn-glycero-3-phosphocholine + a fatty acid + H(+). Snake venom phospholipase A2 (PLA2) that induces myonecrosis and edema upon subcutaneous injections in mice. In vitro, causes a potent blockade of neuromuscular transmission in young chicken biventer cervicis preparation and produces cytotoxicity in murine C2C12 skeletal muscle myotubes and lack cytolytic activity upon myoblasts in vitro. PLA2 catalyzes the calcium-dependent hydrolysis of the 2-acyl groups in 3-sn-phosphoglycerides. This is Basic phospholipase A2 Cdr-13 from Crotalus durissus ruruima (South American rattlesnake).